The following is a 461-amino-acid chain: Bifunctional protein HldE (461 aa).

Positions 1-312 are ribokinase; the sequence is MLEFLSQQKP…IKSFNRVDFE (312 aa). Position 191 to 194 (191 to 194) interacts with ATP; the sequence is NKKE. Residue aspartate 259 is part of the active site. The tract at residues 334–461 is cytidylyltransferase; that stretch reads FTNGCFDIVH…KIIEKIKDKK (128 aa).

In the N-terminal section; belongs to the carbohydrate kinase PfkB family. The protein in the C-terminal section; belongs to the cytidylyltransferase family. In terms of assembly, homodimer.

It carries out the reaction D-glycero-beta-D-manno-heptose 7-phosphate + ATP = D-glycero-beta-D-manno-heptose 1,7-bisphosphate + ADP + H(+). The catalysed reaction is D-glycero-beta-D-manno-heptose 1-phosphate + ATP + H(+) = ADP-D-glycero-beta-D-manno-heptose + diphosphate. It functions in the pathway nucleotide-sugar biosynthesis; ADP-L-glycero-beta-D-manno-heptose biosynthesis; ADP-L-glycero-beta-D-manno-heptose from D-glycero-beta-D-manno-heptose 7-phosphate: step 1/4. Its pathway is nucleotide-sugar biosynthesis; ADP-L-glycero-beta-D-manno-heptose biosynthesis; ADP-L-glycero-beta-D-manno-heptose from D-glycero-beta-D-manno-heptose 7-phosphate: step 3/4. Its function is as follows. Catalyzes the phosphorylation of D-glycero-D-manno-heptose 7-phosphate at the C-1 position to selectively form D-glycero-beta-D-manno-heptose-1,7-bisphosphate. Functionally, catalyzes the ADP transfer from ATP to D-glycero-beta-D-manno-heptose 1-phosphate, yielding ADP-D-glycero-beta-D-manno-heptose. The sequence is that of Bifunctional protein HldE from Campylobacter jejuni subsp. jejuni serotype O:6 (strain 81116 / NCTC 11828).